Here is a 313-residue protein sequence, read N- to C-terminus: MSWANESITGEFVLLGFSDQPWLEFPLFVVFLTSYIVTIFGNLNIILVSHLDPKLHTPMYFFLTNLSVIDLCYITCTVPQMLVNLRSIRKVISFGGCVVQLFMFLALGATECVLLPVMSFDRFVAICRPLHYSVIMHQRLCLQLAAVSWIIGFGNSVWLSILTLQLPRCGHYVIDHFLCEVPALLKLSCVDVTANEAELFFVSVFFHLTPLSLILTSYAFIARAILKIQSAEGRQKAFGTCSSHLIVVSLFYGTALSVYFLPPSPHSKNRRKMVPLFYGIIAPMLNPLIYTLRNKEVKDAFKRLIKRVFLSKN.

Residues 1–27 are Extracellular-facing; sequence MSWANESITGEFVLLGFSDQPWLEFPL. The N-linked (GlcNAc...) asparagine glycan is linked to asparagine 5. A helical membrane pass occupies residues 28-48; the sequence is FVVFLTSYIVTIFGNLNIILV. Residues 49–57 lie on the Cytoplasmic side of the membrane; sequence SHLDPKLHT. A helical membrane pass occupies residues 58–78; it reads PMYFFLTNLSVIDLCYITCTV. The Extracellular segment spans residues 79-97; that stretch reads PQMLVNLRSIRKVISFGGC. A disulfide bridge connects residues cysteine 97 and cysteine 189. The helical transmembrane segment at 98–118 threads the bilayer; that stretch reads VVQLFMFLALGATECVLLPVM. Over 119-143 the chain is Cytoplasmic; that stretch reads SFDRFVAICRPLHYSVIMHQRLCLQ. The chain crosses the membrane as a helical span at residues 144-164; the sequence is LAAVSWIIGFGNSVWLSILTL. At 165 to 200 the chain is on the extracellular side; it reads QLPRCGHYVIDHFLCEVPALLKLSCVDVTANEAELF. The chain crosses the membrane as a helical span at residues 201 to 221; it reads FVSVFFHLTPLSLILTSYAFI. At 222–244 the chain is on the cytoplasmic side; the sequence is ARAILKIQSAEGRQKAFGTCSSH. The helical transmembrane segment at 245 to 265 threads the bilayer; the sequence is LIVVSLFYGTALSVYFLPPSP. The Extracellular segment spans residues 266 to 271; it reads HSKNRR. Residues 272 to 292 form a helical membrane-spanning segment; sequence KMVPLFYGIIAPMLNPLIYTL. The Cytoplasmic portion of the chain corresponds to 293–313; it reads RNKEVKDAFKRLIKRVFLSKN.

This sequence belongs to the G-protein coupled receptor 1 family.

It is found in the cell membrane. In terms of biological role, odorant receptor. This chain is Olfactory receptor 2B6, found in Mus musculus (Mouse).